The following is a 467-amino-acid chain: FAD-dependent oxidoreductase dbaF (467 aa).

The signal sequence occupies residues methionine 1–alanine 20. N-linked (GlcNAc...) asparagine glycosylation is found at asparagine 96, asparagine 134, asparagine 337, asparagine 391, and asparagine 451.

The protein belongs to the beta-cyclopiazonate dehydrogenase family. FAD serves as cofactor.

It functions in the pathway secondary metabolite biosynthesis. Its function is as follows. FAD-dependent oxidoreductase; part of the gene cluster that mediates the biosynthesis of the antibiotic 2,4-dihydroxy-3-methyl-6-(2-oxopropyl)benzaldehyde (DHMBA) and its derivatives. The direct non-reducing polyketide synthase dbaI product is 2,4-dihydroxy-3-methyl-6-(2-oxopropyl)benzaldehyde (DHMBA), produced by condensation of one acetyl-CoA starter unit with 4 malonyl-CoA units and one methylation step. The FAD-dependent monooxygenase dbaH is responsible for the synthesis of yellow pigments derived from the oxidation of DHMBA. The roles of dbaB, C, E and F have still to be determined. The polypeptide is FAD-dependent oxidoreductase dbaF (Emericella nidulans (strain FGSC A4 / ATCC 38163 / CBS 112.46 / NRRL 194 / M139) (Aspergillus nidulans)).